Consider the following 235-residue polypeptide: Regulator of G-protein signaling 18 (235 aa).

A Phosphoserine modification is found at S49. Residues 86 to 202 enclose the RGS domain; the sequence is SFDKLLSHRD…LKSEIYLHLI (117 aa). S216 and S218 each carry phosphoserine.

It is found in the cytoplasm. In terms of biological role, inhibits signal transduction by increasing the GTPase activity of G protein alpha subunits thereby driving them into their inactive GDP-bound form. Binds to G(i) alpha-1, G(i) alpha-2, G(i) alpha-3 and G(q) alpha. This Rattus norvegicus (Rat) protein is Regulator of G-protein signaling 18 (Rgs18).